The following is a 72-amino-acid chain: UPF0352 protein SO_2176 (72 aa).

This sequence belongs to the UPF0352 family.

This is UPF0352 protein SO_2176 from Shewanella oneidensis (strain ATCC 700550 / JCM 31522 / CIP 106686 / LMG 19005 / NCIMB 14063 / MR-1).